The chain runs to 1437 residues: FYVE and coiled-coil domain-containing protein 1 (1437 aa).

At A2 the chain carries N-acetylalanine. A coiled-coil region spans residues 4-30 (SSTETQLQRIIRDLQDAATELSHEFKE). One can recognise an RUN domain in the interval 36-169 (TDDSTSLHKF…VQFDLAPRGY (134 aa)). Phosphoserine is present on S196. Coiled coils occupy residues 223–270 (SLNN…VSRQ), 305–846 (SQAT…SEGA), and 873–1110 (ALTA…KDAL). At T372 the chain carries Phosphothreonine. S837 is subject to Phosphoserine. The FYVE-type zinc-finger motif lies at 1132–1190 (DMEVNHCHDCKREFSWIVRRHHCRICGRIFCYYCCNNYVVTKPSGKKERCCRACFQKFG). Positions 1138, 1141, 1154, 1157, 1162, 1165, 1182, and 1185 each coordinate Zn(2+). Disordered regions lie at residues 1191–1227 (EGSGSNDSSGSGTSQGEPSPMVSPAEASPQSIGSQGI) and 1253–1289 (SGSSLPETPTETDSMDPNTAEQDTTSNSLTPEDTEDV). Positions 1194–1206 (GSNDSSGSGTSQG) are enriched in low complexity. 2 stretches are compositionally biased toward polar residues: residues 1218–1227 (SPQSIGSQGI) and 1253–1283 (SGSSLPETPTETDSMDPNTAEQDTTSNSLTP). The region spanning 1296–1425 (EICLLKSGEL…SKKVLYHLTV (130 aa)) is the GOLD domain.

As to quaternary structure, can form homodimers. Interacts (via C-terminus) with MAP1LC3B. Interacts with RAB7A; the interaction with RAB7A induces FYCO1 recruitment to late endosomal/lysosomal compartments. In terms of tissue distribution, expressed in heart and testis. Expressed in the eye lens.

The protein localises to the cytoplasmic vesicle. Its subcellular location is the autophagosome. It is found in the endosome. It localises to the lysosome. Its function is as follows. May mediate microtubule plus end-directed vesicle transport. This chain is FYVE and coiled-coil domain-containing protein 1 (Fyco1), found in Mus musculus (Mouse).